The chain runs to 145 residues: Bacilliredoxin ABC2045 (145 aa).

Belongs to the bacilliredoxin family.

The polypeptide is Bacilliredoxin ABC2045 (Shouchella clausii (strain KSM-K16) (Alkalihalobacillus clausii)).